Here is a 327-residue protein sequence, read N- to C-terminus: AA9 family lytic polysaccharide monooxygenase B (327 aa).

The first 19 residues, 1-19 (MKSFTATALAALLAQQAAA), serve as a signal peptide directing secretion. Residues His20 and His98 each coordinate Cu(2+). The cysteines at positions 68 and 192 are disulfide-linked. Positions 178 and 187 each coordinate O2. Position 189 (Tyr189) interacts with Cu(2+). The segment covering 264-280 (SPTTSLTPPVSTSTPAP) has biased composition (low complexity). The disordered stretch occupies residues 264–284 (SPTTSLTPPVSTSTPAPGNGG). A CBM1 domain is found at 291-327 (CTVQKYGQCGGQGYTGCTTCAAGSTCNTTNQWYHQCV). An N-linked (GlcNAc...) asparagine glycan is attached at Asn317.

It belongs to the polysaccharide monooxygenase AA9 family. It depends on Cu(2+) as a cofactor.

It is found in the secreted. The enzyme catalyses [(1-&gt;4)-beta-D-glucosyl]n+m + reduced acceptor + O2 = 4-dehydro-beta-D-glucosyl-[(1-&gt;4)-beta-D-glucosyl]n-1 + [(1-&gt;4)-beta-D-glucosyl]m + acceptor + H2O.. Lytic polysaccharide monooxygenase (LPMO) that depolymerizes crystalline and amorphous polysaccharides via the oxidation of scissile alpha- or beta-(1-4)-glycosidic bonds, yielding C1 or C4 oxidation products. Catalysis by LPMOs requires the reduction of the active-site copper from Cu(II) to Cu(I) by a reducing agent and H(2)O(2) or O(2) as a cosubstrate. This chain is AA9 family lytic polysaccharide monooxygenase B (LPMO9B), found in Podospora anserina (strain S / ATCC MYA-4624 / DSM 980 / FGSC 10383) (Pleurage anserina).